The chain runs to 422 residues: PHAF1 protein T01G9.2 (422 aa).

Belongs to the PHAF1 family.

The protein localises to the cytoplasm. It is found in the preautophagosomal structure. Functionally, may play a regulatory role in autophagic activity. This chain is PHAF1 protein T01G9.2, found in Caenorhabditis elegans.